The following is a 127-amino-acid chain: UPF0389 protein GA21628 (127 aa).

The chain crosses the membrane as a helical span at residues 69 to 88; it reads IRLANIMIALTVIGCGIMVY.

The protein belongs to the UPF0389 family.

It localises to the membrane. The protein is UPF0389 protein GA21628 of Drosophila pseudoobscura pseudoobscura (Fruit fly).